The chain runs to 341 residues: MEGVDCSMALADAAAGSPRDLSLVPERLQRREQERQIEVERRKQKRQDQEVEEEKSGFFAAAFARERAAVEELLRGEASAERLEEAANRLQGLRKLLNDSVLFLAAYDLRQGQAALAQLQAVLTERRQELQPKKRFAFKARKKDAAGTAQVDAAPVTSAAPSPPVTKEEEGAPGASWACGFSNLESQDLEKRAEELHQRDVLLSDLTNCTVKLCGNPNTLRLAKARGCKVLCGPVTTSVFLEDCRDCVLAVACQQLRVHTTKDTRVFLQVTSRAIVEDCSGIQFAPYTWSYPGIDKDFQDSGLDRSKNNWDQVDDFNWLARNVASPNWSILPEEERDIQWD.

N-acetylmethionine is present on methionine 1. Over residues 34–49 the composition is skewed to basic and acidic residues; sequence ERQIEVERRKQKRQDQ. The tract at residues 34 to 55 is disordered; it reads ERQIEVERRKQKRQDQEVEEEK. A Phosphoserine modification is found at serine 79. The disordered stretch occupies residues 148–173; the sequence is TAQVDAAPVTSAAPSPPVTKEEEGAP. Positions 163–318 constitute a C-CAP/cofactor C-like domain; that stretch reads PPVTKEEEGA…NWDQVDDFNW (156 aa).

It belongs to the TBCC family. In terms of assembly, supercomplex made of cofactors A to E. Cofactors A and D function by capturing and stabilizing tubulin in a quasi-native conformation. Cofactor E binds to the cofactor D-tubulin complex; interaction with cofactor C then causes the release of tubulin polypeptides that are committed to the native state.

The protein localises to the cytoplasm. Its function is as follows. Tubulin-folding protein; involved in the final step of the tubulin folding pathway. This is Tubulin-specific chaperone C (Tbcc) from Mus musculus (Mouse).